Reading from the N-terminus, the 81-residue chain is uncharacterized protein (81 aa).

Belongs to the ycf70 family.

The protein localises to the plastid. It localises to the chloroplast. This is an uncharacterized protein from Saccharum officinarum (Sugarcane).